The chain runs to 952 residues: Meiotic coiled-coil protein 3 (952 aa).

3 coiled-coil regions span residues 283–611 (QLLQ…KEHL), 684–716 (TKKF…EDKL), and 839–942 (SLEN…RERE).

The protein localises to the cytoplasm. Has a role in meiosis. This Schizosaccharomyces pombe (strain 972 / ATCC 24843) (Fission yeast) protein is Meiotic coiled-coil protein 3 (mcp3).